The following is a 561-amino-acid chain: Transmembrane protein 209 (561 aa).

Ser-9 and Ser-11 each carry phosphoserine. Residues 28–48 form a helical membrane-spanning segment; that stretch reads VVLAWGLLNVSMAGMIYTEMT. The N-linked (GlcNAc...) asparagine glycan is linked to Asn-57. Residues 60–80 form a helical membrane-spanning segment; it reads YWPLWYIELALASLFSLNALF. The residue at position 98 (Ser-98) is a Phosphoserine. Disordered stretches follow at residues 120–156 and 196–233; these read LAATQISPSPPSPSIQGQSVLSYSPSRSPSTSPKFAT and SLSPSSPYPTTVGPVESSGLRARYRSPPTAYNSPTDKE. Positions 138–152 are enriched in low complexity; it reads SVLSYSPSRSPSTSP. Phosphoserine occurs at positions 201 and 248. The interval 250 to 270 is disordered; that stretch reads EEKQHRVKLGSPDSTSPSTSP. Low complexity predominate over residues 260–270; sequence SPDSTSPSTSP. The N-linked (GlcNAc...) asparagine glycan is linked to Asn-274. A Phosphoserine modification is found at Ser-278.

Interacts with NUP205.

It localises to the membrane. It is found in the nucleus envelope. Its subcellular location is the golgi apparatus. The protein resides in the cytoplasm. Functionally, nuclear envelope protein which in association with NUP205, may be involved in nuclear transport of various nuclear proteins in addition to MYC. The polypeptide is Transmembrane protein 209 (Tmem209) (Rattus norvegicus (Rat)).